Here is a 381-residue protein sequence, read N- to C-terminus: Phosphatidyl-myo-inositol mannosyltransferase (381 aa).

GDP-alpha-D-mannose is bound by residues tyrosine 9 and glycine 16. Residues glutamine 18, 69-70 (FN), and arginine 75 contribute to the a 1,2-diacyl-sn-glycero-3-phospho-(1D-myo-inositol) site. GDP-alpha-D-mannose is bound by residues arginine 204, 209–210 (RK), 251–253 (LDD), arginine 256, 274–278 (ESFGI), and glutamate 282.

This sequence belongs to the glycosyltransferase group 1 family. Glycosyltransferase 4 subfamily. In terms of assembly, monomer. The cofactor is Mg(2+).

The protein localises to the cell membrane. It carries out the reaction a 1,2-diacyl-sn-glycero-3-phospho-(1D-myo-inositol) + GDP-alpha-D-mannose = a 1,2-diacyl-sn-glycero-3-phospho-[alpha-D-mannopyranosyl-(1&lt;-&gt;6)-D-myo-inositol] + GDP + H(+). It functions in the pathway phospholipid metabolism; phosphatidylinositol metabolism. Involved in the biosynthesis of phosphatidyl-myo-inositol mannosides (PIM) which are early precursors in the biosynthesis of lipomannans (LM) and lipoarabinomannans (LAM). Catalyzes the addition of a mannosyl residue from GDP-D-mannose (GDP-Man) to the position 2 of the carrier lipid phosphatidyl-myo-inositol (PI) to generate a phosphatidyl-myo-inositol bearing an alpha-1,2-linked mannose residue (PIM1). This Propionibacterium freudenreichii subsp. shermanii (strain ATCC 9614 / DSM 4902 / CIP 103027 / NCIMB 8099 / CIRM-BIA1) protein is Phosphatidyl-myo-inositol mannosyltransferase.